The following is a 475-amino-acid chain: Ribulose bisphosphate carboxylase large chain (475 aa).

Residues M1 to S2 constitute a propeptide that is removed on maturation. Residue P3 is modified to N-acetylproline. Position 14 is an N6,N6,N6-trimethyllysine (K14). N123 and T173 together coordinate substrate. K175 (proton acceptor) is an active-site residue. K177 contributes to the substrate binding site. Residues K201, D203, and E204 each coordinate Mg(2+). K201 is modified (N6-carboxylysine). Catalysis depends on H294, which acts as the Proton acceptor. Residues R295, H327, and S379 each contribute to the substrate site.

The protein belongs to the RuBisCO large chain family. Type I subfamily. In terms of assembly, heterohexadecamer of 8 large chains and 8 small chains; disulfide-linked. The disulfide link is formed within the large subunit homodimers. Requires Mg(2+) as cofactor. Post-translationally, the disulfide bond which can form in the large chain dimeric partners within the hexadecamer appears to be associated with oxidative stress and protein turnover.

It localises to the plastid. The protein localises to the chloroplast. It carries out the reaction 2 (2R)-3-phosphoglycerate + 2 H(+) = D-ribulose 1,5-bisphosphate + CO2 + H2O. The enzyme catalyses D-ribulose 1,5-bisphosphate + O2 = 2-phosphoglycolate + (2R)-3-phosphoglycerate + 2 H(+). In terms of biological role, ruBisCO catalyzes two reactions: the carboxylation of D-ribulose 1,5-bisphosphate, the primary event in carbon dioxide fixation, as well as the oxidative fragmentation of the pentose substrate in the photorespiration process. Both reactions occur simultaneously and in competition at the same active site. This is Ribulose bisphosphate carboxylase large chain from Ostrya virginiana (American hophornbeam).